Reading from the N-terminus, the 121-residue chain is Small ribosomal subunit protein uS13 (121 aa).

The interval 91–121 (HKRGLPVRGQRTRTNARTRKGPRRAAASLKK) is disordered.

It belongs to the universal ribosomal protein uS13 family. In terms of assembly, part of the 30S ribosomal subunit. Forms a loose heterodimer with protein S19. Forms two bridges to the 50S subunit in the 70S ribosome.

Functionally, located at the top of the head of the 30S subunit, it contacts several helices of the 16S rRNA. In the 70S ribosome it contacts the 23S rRNA (bridge B1a) and protein L5 of the 50S subunit (bridge B1b), connecting the 2 subunits; these bridges are implicated in subunit movement. Contacts the tRNAs in the A and P-sites. The polypeptide is Small ribosomal subunit protein uS13 (Bordetella avium (strain 197N)).